We begin with the raw amino-acid sequence, 343 residues long: Ribosomal RNA small subunit methyltransferase C (343 aa).

The protein belongs to the methyltransferase superfamily. RsmC family. In terms of assembly, monomer.

The protein resides in the cytoplasm. The catalysed reaction is guanosine(1207) in 16S rRNA + S-adenosyl-L-methionine = N(2)-methylguanosine(1207) in 16S rRNA + S-adenosyl-L-homocysteine + H(+). Specifically methylates the guanine in position 1207 of 16S rRNA in the 30S particle. In Escherichia coli O8 (strain IAI1), this protein is Ribosomal RNA small subunit methyltransferase C.